A 191-amino-acid chain; its full sequence is 3-isopropylmalate dehydratase small subunit (191 aa).

The protein belongs to the LeuD family. LeuD type 1 subfamily. As to quaternary structure, heterodimer of LeuC and LeuD.

It catalyses the reaction (2R,3S)-3-isopropylmalate = (2S)-2-isopropylmalate. It functions in the pathway amino-acid biosynthesis; L-leucine biosynthesis; L-leucine from 3-methyl-2-oxobutanoate: step 2/4. Its function is as follows. Catalyzes the isomerization between 2-isopropylmalate and 3-isopropylmalate, via the formation of 2-isopropylmaleate. The polypeptide is 3-isopropylmalate dehydratase small subunit (Anaeromyxobacter dehalogenans (strain 2CP-1 / ATCC BAA-258)).